The primary structure comprises 307 residues: Oxygen-dependent coproporphyrinogen-III oxidase (307 aa).

Residue Ser99 coordinates substrate. Residues His103 and His113 each coordinate a divalent metal cation. His113 functions as the Proton donor in the catalytic mechanism. A substrate-binding site is contributed by 115 to 117; it reads NVR. A divalent metal cation is bound by residues His152 and His182. Positions 247–282 are important for dimerization; the sequence is YVEFNLVFDRGTLFGLQSGGRTESILLSMPPTAGWR. A substrate-binding site is contributed by 265 to 267; that stretch reads GGR.

This sequence belongs to the aerobic coproporphyrinogen-III oxidase family. As to quaternary structure, homodimer. The cofactor is a divalent metal cation.

It is found in the cytoplasm. The enzyme catalyses coproporphyrinogen III + O2 + 2 H(+) = protoporphyrinogen IX + 2 CO2 + 2 H2O. Its pathway is porphyrin-containing compound metabolism; protoporphyrin-IX biosynthesis; protoporphyrinogen-IX from coproporphyrinogen-III (O2 route): step 1/1. In terms of biological role, involved in the heme biosynthesis. Catalyzes the aerobic oxidative decarboxylation of propionate groups of rings A and B of coproporphyrinogen-III to yield the vinyl groups in protoporphyrinogen-IX. The polypeptide is Oxygen-dependent coproporphyrinogen-III oxidase (Burkholderia pseudomallei (strain 1106a)).